The chain runs to 337 residues: Oxidoreductase andH (337 aa).

It belongs to the NmrA-type oxidoreductase family.

The protein operates within secondary metabolite biosynthesis; terpenoid biosynthesis. In terms of biological role, oxidoreductase; part of the gene cluster that mediates the biosynthesis of anditomin, a fungal meroterpenoid. The first step of the pathway is the synthesis of 3,5-dimethylorsellinic acid (DMOA) by the polyketide synthase andM. DMOA is then converted to the phthalide compound 5,7-dihydroxy-4,6-dimethylphthalide (DHDMP) by the cytochrome P450 monooxygenase andK, which is further prenylated by the prenyltransferase andD to yield farnesyl-DHDMP. Further epoxidation by the FAD-dependent monooxygenase andE leads to epoxyfarnesyl-DHDMP. The next step involves the terpene cyclase andB that converts epoxyfarnesyl-DHDMP into preandiloid A through opening of the epoxide ring followed by the cyclization of the farnesyl moiety. Preandiloid A is in turn oxidized at the C-3 hydroxyl group to yield preandiloid B by the dehydrogenase andC. The dioxygenase andA is solely responsible for the dehydrogenation of preandiloid B leading to the enone preandiloid C, as well as for the intriguing structural rearrangement to generate the bicyclo[2.2.2]octane core, transforming preandiloid C into andiconin. FAD-binding monooxygenase andJ then produces andilesin D which is reduced by dehydrogenase andI to yield andilesin A. Action of acetyltransferase andG followed by a spontaneous acetate elimination leads then to andilesin B, which is in turn substrate of the short chain dehydrogenase andH to yield andilesin C. Finally, the dioxygenase andF catalyzes the transformation of andilesin C to anditomin. The sequence is that of Oxidoreductase andH from Emericella variicolor (Aspergillus stellatus).